We begin with the raw amino-acid sequence, 429 residues long: UDP-N-acetylglucosamine 1-carboxyvinyltransferase (429 aa).

Residue 22-23 (KN) coordinates phosphoenolpyruvate. UDP-N-acetyl-alpha-D-glucosamine is bound at residue Arg-93. Catalysis depends on Cys-117, which acts as the Proton donor. The residue at position 117 (Cys-117) is a 2-(S-cysteinyl)pyruvic acid O-phosphothioketal. Residues 122 to 126 (RPVDQ), Asp-313, and Ile-335 contribute to the UDP-N-acetyl-alpha-D-glucosamine site.

Belongs to the EPSP synthase family. MurA subfamily.

The protein resides in the cytoplasm. It carries out the reaction phosphoenolpyruvate + UDP-N-acetyl-alpha-D-glucosamine = UDP-N-acetyl-3-O-(1-carboxyvinyl)-alpha-D-glucosamine + phosphate. It participates in cell wall biogenesis; peptidoglycan biosynthesis. Cell wall formation. Adds enolpyruvyl to UDP-N-acetylglucosamine. The chain is UDP-N-acetylglucosamine 1-carboxyvinyltransferase from Variovorax paradoxus (strain S110).